The primary structure comprises 287 residues: Viomycin phosphotransferase (287 aa).

Asp-190 functions as the Proton acceptor in the catalytic mechanism.

This sequence belongs to the aminoglycoside phosphotransferase family.

The catalysed reaction is viomycin + ATP = O-phosphoviomycin + ADP + H(+). Functionally, the aminoglycoside phosphotransferases achieve inactivation of their antibiotic substrates by phosphorylation. In Streptomyces vinaceus, this protein is Viomycin phosphotransferase (vph).